Consider the following 384-residue polypeptide: PqqA peptide cyclase (384 aa).

The Radical SAM core domain occupies 14-226 (IPAPVGLLAE…IRIVEAARER (213 aa)). The [4Fe-4S] cluster site is built by Cys-28, Cys-32, and Cys-35.

It belongs to the radical SAM superfamily. PqqE family. As to quaternary structure, interacts with PqqD. The interaction is necessary for activity of PqqE. It depends on [4Fe-4S] cluster as a cofactor.

It catalyses the reaction [PQQ precursor protein] + S-adenosyl-L-methionine = E-Y cross-linked-[PQQ precursor protein] + 5'-deoxyadenosine + L-methionine + H(+). The protein operates within cofactor biosynthesis; pyrroloquinoline quinone biosynthesis. Functionally, catalyzes the cross-linking of a glutamate residue and a tyrosine residue in the PqqA protein as part of the biosynthesis of pyrroloquinoline quinone (PQQ). This is PqqA peptide cyclase from Methylorubrum populi (strain ATCC BAA-705 / NCIMB 13946 / BJ001) (Methylobacterium populi).